We begin with the raw amino-acid sequence, 461 residues long: MAHDQSSRYANLDLKESDLIAGGKHILVAYKMKPKAGYDYLATAAHFAAESSTGTNVEVSTTDDFTKGVDALVYFIDEATEDMRIAYPIELFDRNVIDGRFMIVSFLTLVIGNNQGMGDVEYGKMIDFYVPERAIQMFDGPATDISNLWRILGRPIKDGGYIAGTIIKPKLGLRPEPFAQAAYQFWLGGDFIKNDEPQGNQVFAPVKKVIPLVYDAMKRAQDETGEAKLFSMNITADDYHEMCARADFALEVFGPDADKLAFLVDGYVGGPGMVTTARRQYPNQYLHYHRAGHGAITSPSSKRGYTAFVLAKMSRLQGASGIHVGTMGYGKMEGEGDDRNIAYMIERDECQGPVYFQKWYGMKPTTPIISGGMNALRLPGFFENLGHGNVINTAGGGSYGHIDSPAAGAKSLRQAYECWKAGADPIEYAKEHKEFARAFESFPGDADKLFPGWRDKLGVHK.

N113 contacts substrate. The active-site Proton acceptor is the K168. Residue K170 participates in substrate binding. Residues K193, D195, and E196 each contribute to the Mg(2+) site. Residue K193 is modified to N6-carboxylysine. H289 functions as the Proton acceptor in the catalytic mechanism. Substrate contacts are provided by R290, H323, and S370.

It belongs to the RuBisCO large chain family. Type II subfamily. Homodimer. Requires Mg(2+) as cofactor.

The enzyme catalyses 2 (2R)-3-phosphoglycerate + 2 H(+) = D-ribulose 1,5-bisphosphate + CO2 + H2O. The catalysed reaction is D-ribulose 1,5-bisphosphate + O2 = 2-phosphoglycolate + (2R)-3-phosphoglycerate + 2 H(+). RuBisCO catalyzes two reactions: the carboxylation of D-ribulose 1,5-bisphosphate, the primary event in carbon dioxide fixation, as well as the oxidative fragmentation of the pentose substrate. Both reactions occur simultaneously and in competition at the same active site. The protein is Ribulose bisphosphate carboxylase of Thiomonas intermedia (strain K12) (Thiobacillus intermedius).